The following is a 120-amino-acid chain: SPbeta prophage-derived uncharacterized protein YosG (120 aa).

The chain is SPbeta prophage-derived uncharacterized protein YosG (yosG) from Bacillus subtilis (strain 168).